The following is a 377-amino-acid chain: Erythronate-4-phosphate dehydrogenase (377 aa).

Substrate-binding residues include serine 45 and threonine 67. NAD(+) contacts are provided by residues 127-128 (QV), aspartate 147, and threonine 176. Arginine 209 is an active-site residue. Aspartate 233 is a binding site for NAD(+). Glutamate 238 is an active-site residue. The active-site Proton donor is histidine 255. Glycine 258 lines the NAD(+) pocket. Residue tyrosine 259 coordinates substrate.

Belongs to the D-isomer specific 2-hydroxyacid dehydrogenase family. PdxB subfamily. In terms of assembly, homodimer.

The protein localises to the cytoplasm. The enzyme catalyses 4-phospho-D-erythronate + NAD(+) = (R)-3-hydroxy-2-oxo-4-phosphooxybutanoate + NADH + H(+). It functions in the pathway cofactor biosynthesis; pyridoxine 5'-phosphate biosynthesis; pyridoxine 5'-phosphate from D-erythrose 4-phosphate: step 2/5. Its function is as follows. Catalyzes the oxidation of erythronate-4-phosphate to 3-hydroxy-2-oxo-4-phosphonooxybutanoate. This Vibrio atlanticus (strain LGP32) (Vibrio splendidus (strain Mel32)) protein is Erythronate-4-phosphate dehydrogenase.